A 29-amino-acid chain; its full sequence is uncharacterized protein (29 aa).

A helical transmembrane segment spans residues 8-28; it reads FALIVVLFILLIIVGTAFVGG.

Belongs to the SscA family.

The protein resides in the membrane. This is an uncharacterized protein from Bacillus subtilis (strain 168).